The primary structure comprises 295 residues: Glutamyl-Q tRNA(Asp) synthetase (295 aa).

Residues 9 to 13 and Glu-45 contribute to the L-glutamate site; that span reads RFAPT. Positions 12–22 match the 'HIGH' region motif; the sequence is PTPSGFLHFGS. Zn(2+) contacts are provided by Cys-101, Cys-103, Tyr-115, and Cys-119. L-glutamate contacts are provided by Tyr-172 and Arg-190. A 'KMSKS' region motif is present at residues 228 to 232; the sequence is KLGKS. An ATP-binding site is contributed by Lys-231.

Belongs to the class-I aminoacyl-tRNA synthetase family. GluQ subfamily. It depends on Zn(2+) as a cofactor.

Catalyzes the tRNA-independent activation of glutamate in presence of ATP and the subsequent transfer of glutamate onto a tRNA(Asp). Glutamate is transferred on the 2-amino-5-(4,5-dihydroxy-2-cyclopenten-1-yl) moiety of the queuosine in the wobble position of the QUC anticodon. In Pseudomonas putida (strain W619), this protein is Glutamyl-Q tRNA(Asp) synthetase.